The chain runs to 192 residues: Small ribosomal subunit protein uS4B (192 aa).

The S4 RNA-binding domain maps to R83 to N145.

The protein belongs to the universal ribosomal protein uS4 family. In terms of assembly, part of the 30S ribosomal subunit. Contacts protein S5. The interaction surface between S4 and S5 is involved in control of translational fidelity.

One of the primary rRNA binding proteins, it binds directly to 16S rRNA where it nucleates assembly of the body of the 30S subunit. In terms of biological role, with S5 and S12 plays an important role in translational accuracy. In Clostridium acetobutylicum (strain ATCC 824 / DSM 792 / JCM 1419 / IAM 19013 / LMG 5710 / NBRC 13948 / NRRL B-527 / VKM B-1787 / 2291 / W), this protein is Small ribosomal subunit protein uS4B (rpsD2).